The following is a 449-amino-acid chain: Protein translocase subunit SecD (449 aa).

The next 6 membrane-spanning stretches (helical) occupy residues 6–26 (GLVFLAILAAMILAFTIVLPT), 272–292 (LAVKAGLVGIILVMIFMIAFY), 294–314 (LPGLLASIALVFYGVIVLALF), 317–337 (VPVTLTLAGIGGFIVSAGMAV), 379–399 (TFIACGILFWVGGTIAAGAPV), and 401–421 (GFAVTLFLGVAVSMFTAIFVT).

This sequence belongs to the SecD/SecF family. SecD subfamily. In terms of assembly, forms a complex with SecF. Part of the essential Sec protein translocation apparatus which comprises SecA, SecYEG and auxiliary proteins SecDF. Other proteins may also be involved.

It localises to the cell membrane. In terms of biological role, part of the Sec protein translocase complex. Interacts with the SecYEG preprotein conducting channel. SecDF uses the proton motive force (PMF) to complete protein translocation after the ATP-dependent function of SecA. The sequence is that of Protein translocase subunit SecD from Dehalococcoides mccartyi (strain VS).